The following is a 75-amino-acid chain: UPF0352 protein YejL (75 aa).

The protein belongs to the UPF0352 family.

The protein is UPF0352 protein YejL of Shigella sonnei (strain Ss046).